We begin with the raw amino-acid sequence, 225 residues long: MKERKFVNEAVKRLLVYEYLVKETENAGFGKMSMKRTPFGTNITLYVNRPGLVIGRRGSKVQQMTETLEKKYAIETPQIEVKDVKDPDLNPSVIAKKIALSLEKGWSYRKAGNTSLKRTIDAGARGVLIKISGKISGERARYQKFIYGNVKYSGEPGSKGMLVGFSTAKLKVGILGVTVKILNPEYKLPDVFSISNLAGGENVGTESETDKADEQGREAANTEES.

The KH type-2 domain maps to 16-85 (VYEYLVKETE…TPQIEVKDVK (70 aa)). Positions 200–225 (GENVGTESETDKADEQGREAANTEES) are disordered. The segment covering 208–217 (ETDKADEQGR) has biased composition (basic and acidic residues).

Belongs to the universal ribosomal protein uS3 family. Part of the 30S ribosomal subunit.

Functionally, binds the lower part of the 30S subunit head. The chain is Small ribosomal subunit protein uS3 from Thermoplasma volcanium (strain ATCC 51530 / DSM 4299 / JCM 9571 / NBRC 15438 / GSS1).